A 68-amino-acid chain; its full sequence is ATP synthase subunit c (68 aa).

A run of 2 helical transmembrane segments spans residues 5-25 and 47-67; these read AAAI…GMIV and FIGV…AFMV.

Belongs to the ATPase C chain family. In terms of assembly, F-type ATPases have 2 components, F(1) - the catalytic core - and F(0) - the membrane proton channel. F(1) has five subunits: alpha(3), beta(3), gamma(1), delta(1), epsilon(1). F(0) has three main subunits: a(1), b(2) and c(10-14). The alpha and beta chains form an alternating ring which encloses part of the gamma chain. F(1) is attached to F(0) by a central stalk formed by the gamma and epsilon chains, while a peripheral stalk is formed by the delta and b chains.

The protein localises to the cell membrane. Functionally, f(1)F(0) ATP synthase produces ATP from ADP in the presence of a proton or sodium gradient. F-type ATPases consist of two structural domains, F(1) containing the extramembraneous catalytic core and F(0) containing the membrane proton channel, linked together by a central stalk and a peripheral stalk. During catalysis, ATP synthesis in the catalytic domain of F(1) is coupled via a rotary mechanism of the central stalk subunits to proton translocation. Key component of the F(0) channel; it plays a direct role in translocation across the membrane. A homomeric c-ring of between 10-14 subunits forms the central stalk rotor element with the F(1) delta and epsilon subunits. This is ATP synthase subunit c from Oceanobacillus iheyensis (strain DSM 14371 / CIP 107618 / JCM 11309 / KCTC 3954 / HTE831).